The sequence spans 405 residues: Argininosuccinate synthase (405 aa).

Residues 11 to 19 and Ala-38 contribute to the ATP site; that span reads AYSGGLDTS. L-citrulline contacts are provided by Tyr-91 and Ser-96. Residue Gly-121 coordinates ATP. The L-aspartate site is built by Thr-123, Asn-127, and Asp-128. Residue Asn-127 participates in L-citrulline binding. Arg-131, Ser-182, Ser-191, Glu-267, and Tyr-279 together coordinate L-citrulline.

It belongs to the argininosuccinate synthase family. Type 1 subfamily. As to quaternary structure, homotetramer.

The protein resides in the cytoplasm. It catalyses the reaction L-citrulline + L-aspartate + ATP = 2-(N(omega)-L-arginino)succinate + AMP + diphosphate + H(+). The protein operates within amino-acid biosynthesis; L-arginine biosynthesis; L-arginine from L-ornithine and carbamoyl phosphate: step 2/3. The protein is Argininosuccinate synthase of Sphingopyxis alaskensis (strain DSM 13593 / LMG 18877 / RB2256) (Sphingomonas alaskensis).